Consider the following 213-residue polypeptide: NADH dehydrogenase [ubiquinone] iron-sulfur protein 7, mitochondrial (213 aa).

A mitochondrion-targeting transit peptide spans 1 to 38 (MAALSAPGLCGFRILGLRSSVGTAVQARGVHQSVATDG). The disordered stretch occupies residues 32 to 53 (QSVATDGPSSTQPALPKARAVA). Residues 33-44 (SVATDGPSSTQP) are compositionally biased toward polar residues. Cys-88 and Cys-89 together coordinate [4Fe-4S] cluster. Arg-111 bears the Hydroxyarginine mark. The [4Fe-4S] cluster site is built by Cys-153 and Cys-183.

Belongs to the complex I 20 kDa subunit family. Core subunit of respiratory chain NADH dehydrogenase (Complex I) which is composed of 45 different subunits. This is a component of the iron-sulfur (IP) fragment of the enzyme. Requires [4Fe-4S] cluster as cofactor. In terms of processing, hydroxylated ar Arg-111 by NDUFAF5 early in the pathway of assembly of complex I, before the formation of the juncture between peripheral and membrane arms.

Its subcellular location is the mitochondrion inner membrane. It carries out the reaction a ubiquinone + NADH + 5 H(+)(in) = a ubiquinol + NAD(+) + 4 H(+)(out). In terms of biological role, core subunit of the mitochondrial membrane respiratory chain NADH dehydrogenase (Complex I) which catalyzes electron transfer from NADH through the respiratory chain, using ubiquinone as an electron acceptor. Essential for the catalytic activity of complex I. The polypeptide is NADH dehydrogenase [ubiquinone] iron-sulfur protein 7, mitochondrial (NDUFS7) (Gorilla gorilla gorilla (Western lowland gorilla)).